The following is a 696-amino-acid chain: Ribonucleoside-diphosphate reductase subunit beta (696 aa).

Asp-97, Glu-127, and His-130 together coordinate Fe cation. Residue Tyr-134 is part of the active site. Residues Glu-194 and Glu-228 each contribute to the Fe cation site. The DOD-type homing endonuclease domain maps to 377 to 507 (DGTIDSKRNG…FVQALCALGG (131 aa)). His-577 is a binding site for Fe cation.

It belongs to the ribonucleoside diphosphate reductase small chain family. As to quaternary structure, tetramer of two alpha and two beta subunits. It depends on Fe cation as a cofactor. This protein undergoes a protein self splicing that involves a post-translational excision of the intervening region (intein) followed by peptide ligation.

It catalyses the reaction a 2'-deoxyribonucleoside 5'-diphosphate + [thioredoxin]-disulfide + H2O = a ribonucleoside 5'-diphosphate + [thioredoxin]-dithiol. Functionally, provides the precursors necessary for DNA synthesis. Catalyzes the biosynthesis of deoxyribonucleotides from the corresponding ribonucleotides. In Aquifex aeolicus (strain VF5), this protein is Ribonucleoside-diphosphate reductase subunit beta (nrdB).